Here is a 350-residue protein sequence, read N- to C-terminus: Histidinol-phosphate aminotransferase (350 aa).

Position 209 is an N6-(pyridoxal phosphate)lysine (Lys-209).

It belongs to the class-II pyridoxal-phosphate-dependent aminotransferase family. Histidinol-phosphate aminotransferase subfamily. In terms of assembly, homodimer. Pyridoxal 5'-phosphate serves as cofactor.

The enzyme catalyses L-histidinol phosphate + 2-oxoglutarate = 3-(imidazol-4-yl)-2-oxopropyl phosphate + L-glutamate. It functions in the pathway amino-acid biosynthesis; L-histidine biosynthesis; L-histidine from 5-phospho-alpha-D-ribose 1-diphosphate: step 7/9. The protein is Histidinol-phosphate aminotransferase of Geobacter sp. (strain M21).